The chain runs to 274 residues: 4-diphosphocytidyl-2-C-methyl-D-erythritol kinase (274 aa).

The active site involves Lys-9. Pro-91–Ser-101 is a binding site for ATP. The active site involves Asp-133.

The protein belongs to the GHMP kinase family. IspE subfamily.

The catalysed reaction is 4-CDP-2-C-methyl-D-erythritol + ATP = 4-CDP-2-C-methyl-D-erythritol 2-phosphate + ADP + H(+). It functions in the pathway isoprenoid biosynthesis; isopentenyl diphosphate biosynthesis via DXP pathway; isopentenyl diphosphate from 1-deoxy-D-xylulose 5-phosphate: step 3/6. Functionally, catalyzes the phosphorylation of the position 2 hydroxy group of 4-diphosphocytidyl-2C-methyl-D-erythritol. In Persephonella marina (strain DSM 14350 / EX-H1), this protein is 4-diphosphocytidyl-2-C-methyl-D-erythritol kinase.